Reading from the N-terminus, the 258-residue chain is Small ribosomal subunit protein mS40 (258 aa).

A mitochondrion-targeting transit peptide spans 1 to 35; the sequence is MAASVLNTLLRRLPMLSLFRGAHRVQVPLQTLCTK. Phosphoserine is present on residues Ser-38 and Ser-49. A disordered region spans residues 218–258; the sequence is RLYQGHLREESGPPPESMPKMPPTAPAEASFTGQTDPQSAL. The span at 229–242 shows a compositional bias: pro residues; sequence GPPPESMPKMPPTA. The span at 248–258 shows a compositional bias: polar residues; that stretch reads FTGQTDPQSAL.

It belongs to the bacterial ribosomal protein bS18 family. Mitochondrion-specific ribosomal protein mS40 subfamily. As to quaternary structure, component of the mitochondrial ribosome small subunit (28S) which comprises a 12S rRNA and about 30 distinct proteins.

Its subcellular location is the mitochondrion. The polypeptide is Small ribosomal subunit protein mS40 (MRPS18B) (Macaca mulatta (Rhesus macaque)).